Consider the following 308-residue polypeptide: Methionyl-tRNA formyltransferase (308 aa).

110 to 113 (SLLP) serves as a coordination point for (6S)-5,6,7,8-tetrahydrofolate.

Belongs to the Fmt family.

It carries out the reaction L-methionyl-tRNA(fMet) + (6R)-10-formyltetrahydrofolate = N-formyl-L-methionyl-tRNA(fMet) + (6S)-5,6,7,8-tetrahydrofolate + H(+). Functionally, attaches a formyl group to the free amino group of methionyl-tRNA(fMet). The formyl group appears to play a dual role in the initiator identity of N-formylmethionyl-tRNA by promoting its recognition by IF2 and preventing the misappropriation of this tRNA by the elongation apparatus. This Mycobacterium sp. (strain KMS) protein is Methionyl-tRNA formyltransferase.